We begin with the raw amino-acid sequence, 441 residues long: pH-response regulator protein palC (441 aa).

Residues 3-352 form the BRO1 domain; sequence ISYTGQLPTT…GAAYAAILQL (350 aa). Disordered regions lie at residues 278–304 and 414–441; these read RKDD…TSSG and KWTP…GSYY.

The protein belongs to the palC family.

Functionally, required for the proteolytic cleavage of the transcription factor RIM101 in response to alkaline ambient pH. The chain is pH-response regulator protein palC from Yarrowia lipolytica (strain CLIB 122 / E 150) (Yeast).